Here is a 474-residue protein sequence, read N- to C-terminus: PTS system MurNAc-GlcNAc-specific EIIBC component (474 aa).

Residues Glu-5 to Glu-87 enclose the PTS EIIB type-1 domain. Cys-27 acts as the Phosphocysteine intermediate; for EIIB activity in catalysis. A PTS EIIC type-1 domain is found at Lys-124–Glu-474. Transmembrane regions (helical) follow at residues Ile-129 to Ile-149, Ile-167 to Gly-187, Val-193 to Ile-213, Leu-228 to Val-248, Ile-268 to Val-288, Ile-299 to Val-319, Leu-343 to Val-363, Ala-378 to Leu-398, Phe-402 to Ile-422, and Leu-444 to Phe-464.

It localises to the cell membrane. The enzyme catalyses N-acetyl-beta-D-muramate-(1-&gt;4)-N-acetyl-D-glucosamine(out) + N(pros)-phospho-L-histidyl-[protein] = 6-phospho-N-acetyl-beta-D-muramate-(1-&gt;4)-N-acetyl-D-glucosamine(in) + L-histidyl-[protein]. Its pathway is cell wall biogenesis; peptidoglycan recycling. Functionally, the phosphoenolpyruvate-dependent sugar phosphotransferase system (sugar PTS), a major carbohydrate active transport system, catalyzes the phosphorylation of incoming sugar substrates concomitantly with their translocation across the cell membrane. This system is involved in the uptake and phosphorylation of MurNAc-GlcNAc, the principle peptidoglycan turnover product of S.aureus, yielding cytoplasmic MurNAc 6P-GlcNAc. The polypeptide is PTS system MurNAc-GlcNAc-specific EIIBC component (Staphylococcus epidermidis (strain ATCC 35984 / DSM 28319 / BCRC 17069 / CCUG 31568 / BM 3577 / RP62A)).